The primary structure comprises 310 residues: Pantothenate kinase (310 aa).

95 to 102 is an ATP binding site; it reads GSVAVGKS.

The protein belongs to the prokaryotic pantothenate kinase family.

The protein resides in the cytoplasm. It carries out the reaction (R)-pantothenate + ATP = (R)-4'-phosphopantothenate + ADP + H(+). Its pathway is cofactor biosynthesis; coenzyme A biosynthesis; CoA from (R)-pantothenate: step 1/5. This Rhodococcus opacus (strain B4) protein is Pantothenate kinase.